We begin with the raw amino-acid sequence, 2353 residues long: MAPYIGTQEGSPSSLGTFSHVQLSKDTNVASQYWEELFHSVGSQPRLACVPLDHQWPRAETTVLASDGLLEAATTFSRTHNISLADLIYAVWAIVSARQTVSGQSTALFTVTGRSYPSAKQDTPENGRAEQDYPLLLSVPEDVDVLSWVRSVSTAAATASALSYIGYDRIMERTSGIRPQVKVSVTFEVDSHDTMAPDDDFPLVFNIIASARLQLSMRHNATVPRGDVRALLDRFAATLQRVTANHDAKVSSVDIMPPAERQLLLDYGKAPLKPKSGMAHSLIEEQAKARPDAAAVQYETEPPLTFSALNTRANQLARQIRPYGTKYIAVHLRMSTDFIVALLAILKSGAAYVILDPDAPAARKSFILDDLQPGLVLVDISTAGELANEVQLGSLLSQASSHDTGDLLHVQDPSSVAYVIYTSGSTGKPKPTLLEHQAVFNGLLAFPPIEGLRQLLFFNPAFSAAQRSIWATLAVGGCLCLASKENLTVHTAKMINTMDINSVDMTSSAAALISPDDVPSLRRMVLGGEMVNPAVIQRWEHRVELLSSYGLSECTQLNWRHRLQSNVSSRLIGQPYDTTTSYILLPGTTELAPLLVPGELCLGGAQLARGYLHRPDETAKRFIPNPFGKGKLYRTGDMAVRHADGSVELIGRIDFQVKINGHRVDPGEPNSIIQAIEEVEDSAVVPASVNNRTVLVAAVVSRPDTEWEALVRKLRPFLAARLPLYMVPQFWVSMPALSVNANGKIDLVAIRRTVEALGESGQLLPERSSIGSREKRDLTDSEKVVRSLWAKVLSLSESEISLEDSFISLGGTSLEAIQVVSQLQVLHQLSLRVEDILLGETLFQVAAAVQPQPVEGKPDNDTISAALFEVAPSIESVGISISSIEDAFPVTPFQEAAIANTMMGGTSYIYSRSYSFEGYSPDDVRAAFETLMKSDGWLRTTYVPHGTSFLQVVKKTADLPWETSDMDVTEYLQKQTSKGMYPGELWWTAAALPNNVLVITAHHALFDFWSNEFLIQDLTSVLQGTPRIQRRGFRPYVEYLQQHDPVAMQEFWQGYLEGAVPSHLGSQIAPENTVAAEVHCDLKRTASQRRVTPGVLLYAAWAIVLGLANSTEDVVMGVTFSGRDVPLAGVLQMSGPTLMVAPLRVKVNKVTPLDKHLEDVQSNLWAVARNAPYGLRKILKASGQAKDLFDTMVNFLIKIPTSTPAGGLRQLPESNLGTVEYTRIELRNESLNRVTLTSTLEPRCAQALADTLAAILGAASDQPLTKLGEFRLVQPVPRLMERLDDPVGSVPVSAVHTIQAEDRVESPGGELAHSALQRMAASHPSRTAVEDISGARITYAGLAIKMNQLAGLLRERGLELEQIVPIMLEKSINTIVAMFGILVAGGAFLPLGPENPRERNLGILEDCGAKLVIADQLNADFFKGTSYEVIVIDAIAWDTIPLQRQVVPGLNPNSLAYVIYTSGSTGKPKGTLIPHSAIVAALDGILYATTQDNSRRIMWSLNYTFDGSFYPLFPTLATGRTLCVAPQNTIVGNLADVITKLRVDQINLTPTMASLLHPDDVPTLEILATGGEPVTHHMLNVWAPRIKVYTSYGPTEATICVTTRQVTPDMNIRNVGRPFPNTTALILDPDTMEELPSGSVGELCIAGPQLARGYLNRPEATNKAFQGTADQRFYRTGDLARLLPNGEIELFGRKDDQVKINGHRMELGEIESVIKQTNVFRQCAVIAATVLKKKQLVAFCSSSVQTPGEATGEDLLLAPTELPEVDQIKAQLTTLPQYMVPTIWLPVSKLPSLTSGKIDRKRLTALVEGMADNVLKSYLPHSETSEICSEAERELQSLWSALFDTPAEDIHANSTFHALGGDSISALNLGSMLRRRGYKIQINDILSRSTLREQAALMVQGQPNGDSTAAEAVPQPVFQPPEAVYERLVELGVSRNDVEDIYPCSPGQIEFFTQGEKPDRFWQLMAVRTLPDDLDFDRWIYLTTQLTKTNQILRALYLQTDAENPQTLVQVVLKHPVLNLAYRSYRTEEEKQSILEAEWQRPFDPAKPFVRYTLLEDSQGTRSLVINLHHSSYDGTLLHIFDDQFQALHQNQPIQQPTPFKDFITHFLRTPKQPQLDYWTRLLQNHSFDFPSAVIEPKLSSTEVAKIDASLGINGLASSTGVTAPIVFQTAYSLLLAHLSGARDVIYDNLVTGRNVALDNPQLINGNCANFLPYHSYVADDIPIETLLRSTQADFWTSTENGLVSLGEIYEALGRDRSTAAAKCLFCFQPFEPVTAQQDPMRWVVMKMSKNRMTFNYAIQMEVVKAAAKGEYLVRFGYDERAFSAEEARAALAWYTRCLDGMVKSKVVGELGV.

Residues 305 to 684 (TFSALNTRAN…AIEEVEDSAV (380 aa)) form an adenylation 1 region. The Carrier 1 domain maps to 776-853 (RDLTDSEKVV…QVAAAVQPQP (78 aa)). Ser813 carries the post-translational modification O-(pantetheine 4'-phosphoryl)serine. The condensation 1 stretch occupies residues 885 to 1147 (EDAFPVTPFQ…LMVAPLRVKV (263 aa)). The segment at 1338–1725 (TYAGLAIKMN…QTNVFRQCAV (388 aa)) is adenylation 2. The Carrier 2 domain maps to 1826–1902 (EICSEAEREL…EQAALMVQGQ (77 aa)). Ser1863 is modified (O-(pantetheine 4'-phosphoryl)serine). The segment at 1939-2214 (EDIYPCSPGQ…NGNCANFLPY (276 aa)) is condensation 2.

Belongs to the NRP synthetase family.

Functionally, nonribosomal peptide synthesis (NRPS) is a key mechanism responsible for the biosynthesis of bioactive metabolites which are potentially contributing to organismal virulence. The polypeptide is Nonribosomal peptide synthetase 7 (NRPS7) (Aspergillus fumigatus (strain ATCC MYA-4609 / CBS 101355 / FGSC A1100 / Af293) (Neosartorya fumigata)).